A 261-amino-acid polypeptide reads, in one-letter code: Putative cysteine protease YopT-like y4zC (261 aa).

Over residues 1–15 (MHSPISGSFTSSTQV) the composition is skewed to polar residues. Disordered regions lie at residues 1-48 (MHSP…CPDK) and 54-73 (SKPQASDPNNPSTSSPARPS). Over residues 61–73 (PNNPSTSSPARPS) the composition is skewed to low complexity. Residues Cys93, His205, and Asp220 contribute to the active site.

It belongs to the peptidase C58 family.

Its function is as follows. Potential cysteine protease, which may play a central role after invasion of host cell. This is Putative cysteine protease YopT-like y4zC from Sinorhizobium fredii (strain NBRC 101917 / NGR234).